We begin with the raw amino-acid sequence, 306 residues long: Non-specific ribonucleoside hydrolase RihC (306 aa).

The active site involves His-235.

Belongs to the IUNH family. RihC subfamily.

Its function is as follows. Hydrolyzes both purine and pyrimidine ribonucleosides with a broad-substrate specificity. The sequence is that of Non-specific ribonucleoside hydrolase RihC from Salmonella dublin (strain CT_02021853).